The sequence spans 970 residues: Vacuolar membrane protease (970 aa).

Residues 1 to 12 (MTTADSNSSATR) show a composition bias toward polar residues. The tract at residues 1–35 (MTTADSNSSATRGSHEMADGSNRVPNDEPYHRKSP) is disordered. Over 1–56 (MTTADSNSSATRGSHEMADGSNRVPNDEPYHRKSPESCENANFFVRAMRASFGYRK) the chain is Cytoplasmic. Over residues 25–35 (PNDEPYHRKSP) the composition is skewed to basic and acidic residues. A helical membrane pass occupies residues 57–77 (TSLTILVFLSVIATVLLSYYD). At 78–397 (SSLEFSVSLP…FVVPMTFVFG (320 aa)) the chain is on the vacuolar side. Asn-146 and Asn-173 each carry an N-linked (GlcNAc...) asparagine glycan. Zn(2+)-binding residues include His-187 and Asp-199. The Proton acceptor role is filled by Glu-234. Glu-235, Glu-260, and His-333 together coordinate Zn(2+). A helical transmembrane segment spans residues 398 to 418 (VNVLLMVLVPLVSLISLALIF). The Cytoplasmic portion of the chain corresponds to 419–423 (AHRKW). A helical transmembrane segment spans residues 424–444 (SVSLVTFFKFPLSFILSIFLL). Topologically, residues 445 to 465 (DNFSSWFVVSVNNFLPNSSAG) are vacuolar. Asn-446 and Asn-461 each carry an N-linked (GlcNAc...) asparagine glycan. Residues 466 to 486 (IIALTYFSFFVLANYLLLNGI) traverse the membrane as a helical segment. Residues 487–502 (NLLFWKFKGTRHDEKL) lie on the Cytoplasmic side of the membrane. Residues 503 to 523 (VVILQISFMFWVSLIWSTANI) traverse the membrane as a helical segment. The Vacuolar portion of the chain corresponds to 524-535 (AKSQFNGEHSGE). A helical transmembrane segment spans residues 536-556 (FLLTLLYILQAAGGVFGLLCW). Residues 557-620 (LFKRSRTVHT…PTKHYSYDWS (64 aa)) lie on the Cytoplasmic side of the membrane. A helical transmembrane segment spans residues 621–641 (IQFLFIVPISSFLSYNYGWLI). The Vacuolar segment spans residues 642 to 658 (LEGLKKTLQESATSEYL). A helical membrane pass occupies residues 659 to 679 (VFRALKLLAVVVAVPYLPFIF). Topologically, residues 680–683 (KVNR) are cytoplasmic. A helical membrane pass occupies residues 684-704 (IVFLVTIFLFVYGLGAIVISE). At 705-970 (PFTEANPLKL…LVNVKKSVLV (266 aa)) the chain is on the vacuolar side. N-linked (GlcNAc...) asparagine glycosylation is found at Asn-738, Asn-797, and Asn-877.

The protein belongs to the peptidase M28 family. Zn(2+) serves as cofactor.

The protein resides in the vacuole membrane. Functionally, may be involved in vacuolar sorting and osmoregulation. The protein is Vacuolar membrane protease of Meyerozyma guilliermondii (strain ATCC 6260 / CBS 566 / DSM 6381 / JCM 1539 / NBRC 10279 / NRRL Y-324) (Yeast).